The chain runs to 321 residues: Protein-L-histidine N-pros-methyltransferase (321 aa).

The first 24 residues, 1 to 24, serve as a signal peptide directing secretion; that stretch reads MRLWLCWLGCYTLLLWALRRRMWA. An N-linked (GlcNAc...) asparagine glycan is attached at asparagine 89. 3 residues coordinate S-adenosyl-L-homocysteine: glutamate 177, asparagine 213, and tyrosine 298.

The protein belongs to the METTL9 family.

The protein resides in the endoplasmic reticulum. It is found in the mitochondrion. It catalyses the reaction L-histidyl-[protein] + S-adenosyl-L-methionine = N(pros)-methyl-L-histidyl-[protein] + S-adenosyl-L-homocysteine + H(+). Protein-histidine N-methyltransferase that specifically catalyzes 1-methylhistidine (pros-methylhistidine) methylation of target proteins. Mediates methylation of proteins with a His-x-His (HxH) motif (where 'x' is preferably a small amino acid); 1-methylhistidine modification may affect the binding of zinc and other metals to its target proteins. The protein is Protein-L-histidine N-pros-methyltransferase of Gallus gallus (Chicken).